The sequence spans 421 residues: Testin (421 aa).

A PET domain is found at 92-199 (MILTNPVAAK…GDVKLPRDMN (108 aa)). Disordered regions lie at residues 133-164 (EKQPVAGSEGAQYRKKQLAKQLPAHDQDPSKC) and 193-213 (KLPRDMNTQGPNKMYIPGGDR). Residues 155-164 (PAHDQDPSKC) show a composition bias toward basic and acidic residues. LIM zinc-binding domains follow at residues 234–297 (YSCY…CDSE), 299–359 (PRCA…NHAV), and 362–421 (QGCH…KMMS).

It belongs to the prickle / espinas / testin family. Interacts via LIM domain 1 with ZYX. Interacts (via LIM domain 3) with ENAH and VASP. Interacts with ALKBH4, talin, actin, alpha-actinin, GRIP1 and PXN. Interacts (via LIM domain 2) with ACTL7A (via N-terminus). Heterodimer with ACTL7A; the heterodimer interacts with ENAH to form a heterotrimer.

Its subcellular location is the cytoplasm. The protein resides in the cell junction. The protein localises to the focal adhesion. Scaffold protein that may play a role in cell adhesion, cell spreading and in the reorganization of the actin cytoskeleton. Plays a role in the regulation of cell proliferation. May act as a tumor suppressor. In Ovis aries (Sheep), this protein is Testin (TES).